Consider the following 61-residue polypeptide: uncharacterized protein (61 aa).

Residues 10 to 61 (YEEENDNEDFEEEVELSREDLNQIINELAPFLIKLLTDLTELTQKKEESENE) adopt a coiled-coil conformation.

This is an uncharacterized protein from Acidianus bottle-shaped virus (isolate Italy/Pozzuoli) (ABV).